The chain runs to 77 residues: Large ribosomal subunit protein uL24 (77 aa).

Belongs to the universal ribosomal protein uL24 family. Part of the 50S ribosomal subunit.

Its function is as follows. One of two assembly initiator proteins, it binds directly to the 5'-end of the 23S rRNA, where it nucleates assembly of the 50S subunit. In terms of biological role, one of the proteins that surrounds the polypeptide exit tunnel on the outside of the subunit. This is Large ribosomal subunit protein uL24 from Campylobacter fetus subsp. fetus (strain 82-40).